The following is a 71-amino-acid chain: Conotoxin LvVIIB (71 aa).

Positions 1–17 (VLIIAVLFLAASELVTA) are cleaved as a signal peptide. Positions 18-42 (DYTRDEWQYRAASLRDAMRNFRDTR) are excised as a propeptide. 3 disulfide bridges follow: C43-C57, C50-C62, and C56-C69.

It belongs to the conotoxin O1 superfamily. Expressed by the venom duct.

It localises to the secreted. The polypeptide is Conotoxin LvVIIB (Conus lividus (Livid cone)).